Reading from the N-terminus, the 377-residue chain is Chaperone protein DnaJ (377 aa).

Positions 5-70 (DFYEVLGVER…SKRAAYDQYG (66 aa)) constitute a J domain. The CR-type zinc finger occupies 136–214 (GTTVTIRVPT…CHGQGRVEEQ (79 aa)). 8 residues coordinate Zn(2+): Cys149, Cys152, Cys166, Cys169, Cys188, Cys191, Cys202, and Cys205. CXXCXGXG motif repeat units lie at residues 149–156 (CKTCNGSG), 166–173 (CTTCGGIG), 188–195 (CPRCHGTG), and 202–209 (CGSCHGQG).

This sequence belongs to the DnaJ family. In terms of assembly, homodimer. Requires Zn(2+) as cofactor.

It localises to the cytoplasm. Its function is as follows. Participates actively in the response to hyperosmotic and heat shock by preventing the aggregation of stress-denatured proteins and by disaggregating proteins, also in an autonomous, DnaK-independent fashion. Unfolded proteins bind initially to DnaJ; upon interaction with the DnaJ-bound protein, DnaK hydrolyzes its bound ATP, resulting in the formation of a stable complex. GrpE releases ADP from DnaK; ATP binding to DnaK triggers the release of the substrate protein, thus completing the reaction cycle. Several rounds of ATP-dependent interactions between DnaJ, DnaK and GrpE are required for fully efficient folding. Also involved, together with DnaK and GrpE, in the DNA replication of plasmids through activation of initiation proteins. In Pseudomonas aeruginosa (strain LESB58), this protein is Chaperone protein DnaJ.